The sequence spans 487 residues: MSKKWTRNTAAMAAILSALCLSTNALATSEQAVTDENQTTTQQEGMRFEPRNEKFAEAHAEQYKSWKATQESEEIEDALEGDPNMVVLWAGYGFSKDYNKARGHFYAITDVRETLRTGGPTDDKSGPMPMACWSCKSPDVARVIDDRGEDGYFEGKWARLGAEINNAIGCSDCHNTGSEEFAKGGPALQMSRPYAERAMETIGKKFEDQSRFDQQAQVCGQCHVEYYFTGPKKSVKFPWDKGTSVDDMEVYYDEIGFKDWTHGVSKAPMLKAQHPGYETWREGIHGKNNVTCIDCHMPKVQNEDGTVFTDHKVGNPFDRFEDTCAQCHTQTKAALKSVVATRKASVLEMKLRAEKQIIAAHFEAKAAWDAGATEAEMEPILMDIRHAQWRWDYAIASHGVHMHAPEVALRILGTALDKAGDARAKVIRLLATKGITEEIQIPDISTKVKAQQALGMDMNKMNAEKDEFLKTIVPEWDKQADAREAKY.

The N-terminal stretch at methionine 1–alanine 27 is a signal peptide. A heme c-binding site is contributed by histidine 104. Cysteine 132, cysteine 135, and lysine 136 together coordinate heme. Heme c-binding residues include cysteine 170, cysteine 173, histidine 174, cysteine 219, cysteine 222, and histidine 223. Residues glutamate 225, tyrosine 226, lysine 271, and glutamine 273 each coordinate Ca(2+). Tyrosine 226 lines the substrate pocket. Histidine 274 is a binding site for substrate. Positions 285, 292, 295, 296, 311, 324, 327, 328, and 403 each coordinate heme c.

The protein belongs to the cytochrome c-552 family. Ca(2+) serves as cofactor. It depends on heme c as a cofactor.

It localises to the periplasm. It carries out the reaction 6 Fe(III)-[cytochrome c] + NH4(+) + 2 H2O = 6 Fe(II)-[cytochrome c] + nitrite + 8 H(+). It functions in the pathway nitrogen metabolism; nitrate reduction (assimilation). In terms of biological role, catalyzes the reduction of nitrite to ammonia, consuming six electrons in the process. This is Cytochrome c-552 from Photobacterium profundum (strain SS9).